Here is a 138-residue protein sequence, read N- to C-terminus: Small ribosomal subunit protein uS11c (138 aa).

Positions 1 to 21 (MTKSIPRIGSRRGGRIASRKN) are disordered. Positions 9 to 21 (GSRRGGRIASRKN) are enriched in basic residues.

It belongs to the universal ribosomal protein uS11 family. Part of the 30S ribosomal subunit.

Its subcellular location is the plastid. It is found in the chloroplast. This is Small ribosomal subunit protein uS11c from Calycanthus floridus var. glaucus (Eastern sweetshrub).